The sequence spans 354 residues: MLFHLRTLLNNAALRNGHNFVVRNFRCGQPLQDKVQLKGRDLLTLKNFTGEEIKYMLWLSADLKFRIKQKGEYLPLLQGKSLGMIFEKRSTRTRLSTETGFALLGGHPCFLTTDDIHLGVNESLTDTARVLSSMTDAVLARVYKQSDLDLLAKEASIPIVNGLSDLYHPIQILADYLTLQEHYGSLKGLTLSWIGDGNNILHSIMMSAAKFGMHLQVATPKGYEPDPSITKMAEQYAKENGTKLSLTNDPLEAACGGNVLITDTWISMGQEEEKKKRLQAFQGYQVTMKTAKVAAPDWTFLHCLPRKPEEVDDEVFYSPRSLVSPEAENRKWTIMAVMVSLLTDYSPQLQKPKF.

A mitochondrion-targeting transit peptide spans 1–32 (MLFHLRTLLNNAALRNGHNFVVRNFRCGQPLQ). Lysine 70 is subject to N6-acetyllysine; alternate. Position 70 is an N6-succinyllysine; alternate (lysine 70). Lysine 80 carries the N6-succinyllysine modification. Residue lysine 88 is modified to N6-acetyllysine; alternate. At lysine 88 the chain carries N6-succinyllysine; alternate. At serine 133 the chain carries Phosphoserine. Lysine 144, lysine 221, lysine 231, and lysine 238 each carry N6-acetyllysine; alternate. 4 positions are modified to N6-succinyllysine; alternate: lysine 144, lysine 221, lysine 231, and lysine 238. At lysine 243 the chain carries N6-acetyllysine. Residue aspartate 263 is part of the active site. 2 positions are modified to N6-succinyllysine: lysine 274 and lysine 289. Lysine 292 carries the N6-acetyllysine; alternate modification. An N6-succinyllysine; alternate modification is found at lysine 292. Cysteine 303 is a catalytic residue. Lysine 307 carries the N6-acetyllysine; alternate modification. Lysine 307 carries the post-translational modification N6-succinyllysine; alternate.

Belongs to the aspartate/ornithine carbamoyltransferase superfamily. OTCase family. As to quaternary structure, homotrimer. Acetylation at Lys-88 negatively regulates ornithine carbamoyltransferase activity in response to nutrient signals.

Its subcellular location is the mitochondrion matrix. The enzyme catalyses carbamoyl phosphate + L-ornithine = L-citrulline + phosphate + H(+). Its pathway is nitrogen metabolism; urea cycle; L-citrulline from L-ornithine and carbamoyl phosphate: step 1/1. With respect to regulation, negatively regulated by lysine acetylation. Its function is as follows. Catalyzes the second step of the urea cycle, the condensation of carbamoyl phosphate with L-ornithine to form L-citrulline. The urea cycle ensures the detoxification of ammonia by converting it to urea for excretion. In Bos taurus (Bovine), this protein is Ornithine transcarbamylase, mitochondrial.